The chain runs to 278 residues: Bicarbonate transport ATP-binding protein CmpD (278 aa).

The region spanning 21–254 (LIVENVSKIY…RPRDRERIME (234 aa)) is the ABC transporter domain. 57–64 (GHSGCGKS) contributes to the ATP binding site.

This sequence belongs to the ABC transporter superfamily. Nitrate/nitrite/cyanate uptake transporter (NitT) (TC 3.A.1.16) family. As to quaternary structure, the complex is composed of two ATP-binding proteins (CmpC and CmpD), a transmembrane protein (CmpB) and a solute-binding protein (CmpA).

It is found in the cell inner membrane. Part of the ABC transporter complex CmpABCD involved in bicarbonate transport. Responsible for energy coupling to the transport system. The sequence is that of Bicarbonate transport ATP-binding protein CmpD (cmpD) from Synechococcus elongatus (strain ATCC 33912 / PCC 7942 / FACHB-805) (Anacystis nidulans R2).